Here is a 410-residue protein sequence, read N- to C-terminus: Adenosylhomocysteinase (410 aa).

Positions 117 and 142 each coordinate substrate. 143-145 contributes to the NAD(+) binding site; sequence TTT. Substrate is bound by residues K172 and D176. Residues N177, 206-211, E229, 285-287, and N332 each bind NAD(+); these read GYGYCG and AGH.

This sequence belongs to the adenosylhomocysteinase family. The cofactor is NAD(+).

It is found in the cytoplasm. It carries out the reaction S-adenosyl-L-homocysteine + H2O = L-homocysteine + adenosine. Its pathway is amino-acid biosynthesis; L-homocysteine biosynthesis; L-homocysteine from S-adenosyl-L-homocysteine: step 1/1. Its function is as follows. May play a key role in the regulation of the intracellular concentration of adenosylhomocysteine. This is Adenosylhomocysteinase from Thermoplasma acidophilum (strain ATCC 25905 / DSM 1728 / JCM 9062 / NBRC 15155 / AMRC-C165).